A 371-amino-acid chain; its full sequence is Macronuclear solute carrier homolog CR-MSC (371 aa).

Solcar repeat units follow at residues 16-111, 120-208, and 215-304; these read RMNY…FYDK, ARPD…CKEN, and PHWI…LSQF. A run of 6 helical transmembrane segments spans residues 22–42, 89–109, 126–146, 184–204, 221–241, and 281–301; these read FAAA…LDMV, TFFF…GYFY, VAAG…IDIV, AGAN…IYDW, LWGT…FDMI, and FGSF…ICYL.

This sequence belongs to the mitochondrial carrier (TC 2.A.29) family.

It localises to the membrane. The polypeptide is Macronuclear solute carrier homolog CR-MSC (Oxytricha trifallax (Sterkiella histriomuscorum)).